The sequence spans 424 residues: UDP-N-acetylglucosamine 1-carboxyvinyltransferase (424 aa).

22–23 (KN) lines the phosphoenolpyruvate pocket. UDP-N-acetyl-alpha-D-glucosamine is bound at residue Arg-93. Residue Cys-117 is the Proton donor of the active site. Position 117 is a 2-(S-cysteinyl)pyruvic acid O-phosphothioketal (Cys-117). Residues 122–126 (RPVDL), 162–165 (KVSV), Asp-307, and Ile-329 each bind UDP-N-acetyl-alpha-D-glucosamine.

This sequence belongs to the EPSP synthase family. MurA subfamily.

It localises to the cytoplasm. The enzyme catalyses phosphoenolpyruvate + UDP-N-acetyl-alpha-D-glucosamine = UDP-N-acetyl-3-O-(1-carboxyvinyl)-alpha-D-glucosamine + phosphate. It functions in the pathway cell wall biogenesis; peptidoglycan biosynthesis. In terms of biological role, cell wall formation. Adds enolpyruvyl to UDP-N-acetylglucosamine. The polypeptide is UDP-N-acetylglucosamine 1-carboxyvinyltransferase (Haemophilus influenzae (strain PittGG)).